A 123-amino-acid chain; its full sequence is Large ribosomal subunit protein uL29 (123 aa).

N6-acetyllysine is present on Lys19. Residue Lys25 forms a Glycyl lysine isopeptide (Lys-Gly) (interchain with G-Cter in SUMO2) linkage. Position 29 is a phosphoserine (Ser29). Lys43 carries the post-translational modification N6-acetyllysine. Residues 85–123 (PKKTRAMRRRLNKHEESLKTKKQQRKERLYPLRKYAVKA) form a disordered region. The segment covering 86 to 96 (KKTRAMRRRLN) has biased composition (basic residues).

It belongs to the universal ribosomal protein uL29 family. In terms of assembly, component of the large ribosomal subunit.

The protein resides in the cytoplasm. Its function is as follows. Component of the large ribosomal subunit. The ribosome is a large ribonucleoprotein complex responsible for the synthesis of proteins in the cell. In Oryctolagus cuniculus (Rabbit), this protein is Large ribosomal subunit protein uL29 (RPL35).